Here is a 294-residue protein sequence, read N- to C-terminus: 4-hydroxy-tetrahydrodipicolinate synthase (294 aa).

Threonine 45 provides a ligand contact to pyruvate. The active-site Proton donor/acceptor is tyrosine 133. Lysine 161 acts as the Schiff-base intermediate with substrate in catalysis. Isoleucine 203 is a pyruvate binding site.

It belongs to the DapA family. Homotetramer; dimer of dimers.

The protein resides in the cytoplasm. It carries out the reaction L-aspartate 4-semialdehyde + pyruvate = (2S,4S)-4-hydroxy-2,3,4,5-tetrahydrodipicolinate + H2O + H(+). Its pathway is amino-acid biosynthesis; L-lysine biosynthesis via DAP pathway; (S)-tetrahydrodipicolinate from L-aspartate: step 3/4. Catalyzes the condensation of (S)-aspartate-beta-semialdehyde [(S)-ASA] and pyruvate to 4-hydroxy-tetrahydrodipicolinate (HTPA). The protein is 4-hydroxy-tetrahydrodipicolinate synthase of Shewanella sp. (strain MR-4).